The chain runs to 489 residues: Protein P7 (489 aa).

RNA-binding regions lie at residues T129–L251 and A321–N351.

Belongs to the phytoreovirus protein P7 family.

The protein resides in the virion. It localises to the host cytoplasm. Probable component of the transcriptional machinery present in the inner capsid. Displays dsRNA binding activity and may play an important role in the sorting of viral RNA and virion assembly. Together with the RNA-directed RNA polymerase P1 and capping enzyme P5, forms an transcriptional complex positioned near the channels situated at each of the five-fold vertices of the core. This Rice gall dwarf virus (RGDV) protein is Protein P7.